Consider the following 252-residue polypeptide: Mediator of RNA polymerase II transcription subunit 4 (252 aa).

The stretch at 70-112 (KIHQEMQVLEKEVEKRDSDIQQLQKQLKEAEHILATAVYQAKE) forms a coiled coil. Residues 218–252 (HSNEFLMESLGPNKENEEDVEVMSTDSSSSSSDSD) form a disordered region. Low complexity predominate over residues 241–252 (STDSSSSSSDSD).

It belongs to the Mediator complex subunit 4 family. As to quaternary structure, component of the Mediator complex.

The protein localises to the nucleus. Its function is as follows. Component of the Mediator complex, a coactivator involved in the regulated transcription of nearly all RNA polymerase II-dependent genes. Mediator functions as a bridge to convey information from gene-specific regulatory proteins to the basal RNA polymerase II transcription machinery. Mediator is recruited to promoters by direct interactions with regulatory proteins and serves as a scaffold for the assembly of a functional preinitiation complex with RNA polymerase II and the general transcription factors. In Xenopus tropicalis (Western clawed frog), this protein is Mediator of RNA polymerase II transcription subunit 4 (med4).